The following is a 267-amino-acid chain: Phosphatidylglycerol--prolipoprotein diacylglyceryl transferase (267 aa).

3 consecutive transmembrane segments (helical) span residues Val-21 to Gly-41, Leu-60 to Tyr-80, and Ile-95 to Trp-115. Position 143 (Arg-143) interacts with a 1,2-diacyl-sn-glycero-3-phospho-(1'-sn-glycerol). 2 consecutive transmembrane segments (helical) span residues Gly-203–Phe-223 and Gly-240–Tyr-260.

Belongs to the Lgt family.

The protein resides in the cell inner membrane. It catalyses the reaction L-cysteinyl-[prolipoprotein] + a 1,2-diacyl-sn-glycero-3-phospho-(1'-sn-glycerol) = an S-1,2-diacyl-sn-glyceryl-L-cysteinyl-[prolipoprotein] + sn-glycerol 1-phosphate + H(+). The protein operates within protein modification; lipoprotein biosynthesis (diacylglyceryl transfer). Catalyzes the transfer of the diacylglyceryl group from phosphatidylglycerol to the sulfhydryl group of the N-terminal cysteine of a prolipoprotein, the first step in the formation of mature lipoproteins. This chain is Phosphatidylglycerol--prolipoprotein diacylglyceryl transferase, found in Glaesserella parasuis serovar 5 (strain SH0165) (Haemophilus parasuis).